The following is a 466-amino-acid chain: Fez family zinc finger protein 1 (466 aa).

The short motif at P34–P49 is the Engrailed homology 1 repressor element. 6 C2H2-type zinc fingers span residues F261–H283, F289–H311, H317–H339, F345–H367, F373–H395, and F401–H424. Positions L446 to Y466 are disordered. Positions H453 to Y466 are enriched in polar residues.

Belongs to the krueppel C2H2-type zinc-finger protein family.

The protein resides in the nucleus. Its function is as follows. Transcription repressor. Involved in the development of the forebrain region. The protein is Fez family zinc finger protein 1 (fezf1) of Xenopus laevis (African clawed frog).